Here is a 425-residue protein sequence, read N- to C-terminus: Phosphoribosylamine--glycine ligase (425 aa).

Residues 110 to 317 (KEFMKRHGIP…LFDALLASVE (208 aa)) enclose the ATP-grasp domain. 137 to 198 (ETCPTFPQVI…EAFLSGQEAS (62 aa)) contacts ATP. Residues glutamate 287 and asparagine 289 each coordinate Mg(2+).

The protein belongs to the GARS family. Requires Mg(2+) as cofactor. It depends on Mn(2+) as a cofactor.

The catalysed reaction is 5-phospho-beta-D-ribosylamine + glycine + ATP = N(1)-(5-phospho-beta-D-ribosyl)glycinamide + ADP + phosphate + H(+). Its pathway is purine metabolism; IMP biosynthesis via de novo pathway; N(1)-(5-phospho-D-ribosyl)glycinamide from 5-phospho-alpha-D-ribose 1-diphosphate: step 2/2. The chain is Phosphoribosylamine--glycine ligase from Chlorobaculum tepidum (strain ATCC 49652 / DSM 12025 / NBRC 103806 / TLS) (Chlorobium tepidum).